The sequence spans 185 residues: Dehydrin ERD14 (185 aa).

4 stretches are compositionally biased toward basic and acidic residues: residues 1-13 (MAEEIKNVPEQEV), 25-45 (VTDRGLFDFLGKKKDETKPEE), 52-78 (FEQKVHISEPEPEVKHESLLEKLHRSD), and 103-134 (KPTTEVEVKEEEKKGFMEKLKEKLPGHKKPED). Disordered stretches follow at residues 1-138 (MAEE…GSAV) and 166-185 (EKLPGYHPKTTVEEEKKDKE). The residue at position 2 (alanine 2) is an N-acetylalanine. Serine 59 carries the phosphoserine modification. A run of 2 repeats spans residues 112 to 132 (EEEKKGFMEKLKEKLPGHKKP) and 154 to 174 (PVEKKGILEKIKEKLPGYHPK). The interval 112–174 (EEEKKGFMEK…KEKLPGYHPK (63 aa)) is 2 X 21 AA repeats, Lys-rich.

This sequence belongs to the plant dehydrin family. In terms of tissue distribution, in stems, cauline leaves, roots and flowers. Low levels found in maturing seeds. Absent in dry seeds.

Functionally, intrinsically disordered protein acting as a chaperone. Prevents heat-induced aggregation and/or inactivation of various substrates. Binds to acidic phospholipid vesicles without affecting membrane fluidity. This is Dehydrin ERD14 (ERD14) from Arabidopsis thaliana (Mouse-ear cress).